The following is a 918-amino-acid chain: uncharacterized protein (918 aa).

Disordered stretches follow at residues 66–150 (AMVH…SSYG), 226–283 (GADG…NADF), 326–481 (ADGT…EFGN), 515–548 (ALEK…GSNL), 594–707 (EITH…NAVK), 737–774 (NHSN…SHLT), and 800–918 (HITH…IIQM). The span at 79 to 89 (QSSGSSSNTHS) shows a compositional bias: low complexity. Positions 103–127 (NSEKKDGYNKESKVDEANENTKIKS) are enriched in basic and acidic residues. Residues 270–281 (SKKAASASGSNA) show a composition bias toward low complexity. Composition is skewed to polar residues over residues 326–354 (ADGT…SSDL), 363–372 (KSHSTSNKTD), and 379–404 (ANQS…SSIE). Positions 430-441 (SSSHSKSASGTS) are enriched in low complexity. Over residues 515 to 533 (ALEKNHEKNSDGTFKDESK) the composition is skewed to basic and acidic residues. Polar residues-rich tracts occupy residues 534-545 (GSNSRVNRTDGG) and 604-619 (VAAS…TSMS). Residues 632–647 (SSQAADSHDAISASSD) are compositionally biased toward low complexity. Residues 648–660 (VDAKIVKHADRSE) are compositionally biased toward basic and acidic residues. Polar residues predominate over residues 661–672 (SISNDSSNQTAS). Positions 673 to 688 (EHNDSSKQSEHEKRQN) are enriched in basic and acidic residues. A compositionally biased stretch (polar residues) spans 689–702 (ADGSFSDVSSNSAK). Composition is skewed to basic and acidic residues over residues 738–765 (HSND…DAKH), 800–814 (HITH…DAGH), 830–846 (EGFK…EGAQ), and 883–918 (LAKD…IIQM).

This is an uncharacterized protein from Caenorhabditis elegans.